Here is a 313-residue protein sequence, read N- to C-terminus: Formimidoylglutamase (313 aa).

The Mn(2+) site is built by H130, D155, H157, D159, D241, and D243.

This sequence belongs to the arginase family. Mn(2+) serves as cofactor.

It catalyses the reaction N-formimidoyl-L-glutamate + H2O = formamide + L-glutamate. Its pathway is amino-acid degradation; L-histidine degradation into L-glutamate; L-glutamate from N-formimidoyl-L-glutamate (hydrolase route): step 1/1. Catalyzes the conversion of N-formimidoyl-L-glutamate to L-glutamate and formamide. This is Formimidoylglutamase from Salmonella heidelberg (strain SL476).